We begin with the raw amino-acid sequence, 116 residues long: uncharacterized protein (116 aa).

The next 2 helical transmembrane spans lie at 40-60 and 72-92; these read AIVKVDFFSFDGAGFCIIGIL and FLGSICRSIFSIVAQMQVVPI.

The protein resides in the membrane. This is an uncharacterized protein from Saccharomyces cerevisiae (strain ATCC 204508 / S288c) (Baker's yeast).